A 660-amino-acid chain; its full sequence is Sodium/nucleoside cotransporter 2 (660 aa).

S46 is modified (phosphoserine). The next 14 membrane-spanning stretches (helical) occupy residues 82–102, 106–125, 150–168, 174–194, 202–222, 235–255, 262–282, 297–316, 338–357, 364–383, 425–445, 456–476, 531–551, and 569–589; these read ILLGLLCLAYAAYFLAACILN, ALALFVITCLVIFILACHFL, KRVFVGLSVVGLILWLALD, EQLISFAGICMFILILFACSK, RTVFWGLGLQFIFGILVIRTE, IQIFLAYTVEGSSFVFGDTLV, QSLPIIIFFGCVMSILYYLGL, TMGTTAAETLAVAGNIFVGM, VMTGGFATIAGTVLGAFISF, LISASVMAAPCALALSKLVY, VAANLIAFLAVLAFINATLSW, SFQVICSYVLRPMVFMMGVQW, TTFSLCGFANLSSIGITLGGL, and ALFTGACVSFISACMAGILYV.

Belongs to the concentrative nucleoside transporter (CNT) (TC 2.A.41) family.

It localises to the membrane. The protein localises to the apicolateral cell membrane. The enzyme catalyses adenosine(out) + Na(+)(out) = adenosine(in) + Na(+)(in). It catalyses the reaction inosine(out) + Na(+)(out) = inosine(in) + Na(+)(in). It carries out the reaction guanosine(out) + Na(+)(out) = guanosine(in) + Na(+)(in). The catalysed reaction is uridine(out) + Na(+)(out) = uridine(in) + Na(+)(in). Its function is as follows. Sodium-dependent and purine-selective transporter. Exhibits the transport characteristics of the nucleoside transport system cif or N1 subtype (N1/cif) (selective for purine nucleosides and uridine). Plays a critical role in specific uptake and salvage of purine nucleosides in kidney and other tissues. May contribute to regulate the transport of organic compounds in testes across the blood-testis-barrier. The polypeptide is Sodium/nucleoside cotransporter 2 (Slc28a2) (Mus musculus (Mouse)).